A 190-amino-acid chain; its full sequence is Putative manganese efflux pump MntP (190 aa).

The next 6 helical transmembrane spans lie at 5–25 (ALLA…VATG), 41–61 (WHFG…GQGI), 64–84 (FVDA…GLKM), 105–125 (TSLI…GVTL), 127–147 (MLGL…LGLT), and 169–189 (ILGG…SGVF).

The protein belongs to the MntP (TC 9.B.29) family.

It localises to the cell inner membrane. Functionally, probably functions as a manganese efflux pump. In Oleidesulfovibrio alaskensis (strain ATCC BAA-1058 / DSM 17464 / G20) (Desulfovibrio alaskensis), this protein is Putative manganese efflux pump MntP.